Consider the following 44-residue polypeptide: Unknown protein 1 (44 aa).

In Lonomia obliqua (Moth), this protein is Unknown protein 1.